We begin with the raw amino-acid sequence, 77 residues long: Conotoxin VnMEKL-0111 (77 aa).

The N-terminal stretch at 1 to 19 (MEKLTILLLVAAVLMSTQA) is a signal peptide. Residues 20-46 (LIQHDGEKSQKAKMKFLTARTLSAKTR) constitute a propeptide that is removed on maturation. Disulfide bonds link cysteine 50-cysteine 66, cysteine 57-cysteine 71, and cysteine 65-cysteine 75.

The protein belongs to the conotoxin O2 superfamily. As to expression, expressed by the venom duct.

The protein resides in the secreted. This is Conotoxin VnMEKL-0111 from Conus ventricosus (Mediterranean cone).